Reading from the N-terminus, the 462-residue chain is MSKLWGGRFTEEAEAWVEEFGASISFDQQLVNQDINGSMAHVTMLAKQGIVTQEEAEKIKIGLQYLLKEAKENKLQFSVEAEDIHLNIEKMLIEQIGEVGGKLHTGRSRNDQVATDMHLYLKEKVEHIIKATKQLQTVLVHQAENNIETIMPGYTHLQRAQPISFAHHILAYFWMLERDVNRYEDSLKRINISPLGAGALAGTTFPIDREYSAELLGFNGIYENSLDAVSDRDFILEFLSNSSMLMMHLSRFCEELILWSSQEFQFIEMSDQYATGSSIMPQKKNPDMAELIRGKTGRVYGNLFSLLTVMKGLPLAYNKDLQEDKEGMFDTVKTVEGCLHIMAGMLETMTVNKEKMGQAVTQDFSNATEIADYLANKGLPFRQAHEIVGKLVLYCTQKGIYLLDVSLETYKEMSSLFEEDLYEVLSPYAAVKRRNSAGGTGFEQIKNALEKAKGLTKEVIKG.

It belongs to the lyase 1 family. Argininosuccinate lyase subfamily.

The protein localises to the cytoplasm. It carries out the reaction 2-(N(omega)-L-arginino)succinate = fumarate + L-arginine. The protein operates within amino-acid biosynthesis; L-arginine biosynthesis; L-arginine from L-ornithine and carbamoyl phosphate: step 3/3. This is Argininosuccinate lyase from Bacillus cereus (strain B4264).